The chain runs to 377 residues: Adenosine 3'-phospho 5'-phosphosulfate transporter 2 (377 aa).

The next 10 helical transmembrane spans lie at 50–70 (LCCGGVFALYLVYGYMQELIF), 77–97 (PYGWYLTLVQFAYYTAFGYIE), 115–135 (ALLAFLTLGTMGLSNSSVGYL), 138–158 (PTQVIFKCCKLIPVLIGSVLI), 164–184 (GPMDFFAATAMCLGLILFTLA), 195–215 (FGVFLISLALLCDAAIGNVQE), 228–248 (VVIYSYGIGFVYLAVIMLLSG), 266–286 (GYAFLFSLTGYLGIQIVLTLV), 293–313 (LAATVTTARKAVTIALSFVFF), and 317–337 (FTIQYLWSGLIVVFGIYLNVY).

This sequence belongs to the nucleotide-sugar transporter family. SLC35B subfamily.

It is found in the golgi apparatus membrane. Its function is as follows. Mediates the transport of adenosine 3'-phospho 5'-phosphosulfate (PAPS), from cytosol into Golgi. PAPS is a universal sulfuryl donor for sulfation events that take place in the Golgi. Essential for viability. Involved in glycosaminoglycan synthesis and the subsequent signaling. May be involved in hh and dpp signaling by controlling the sulfation of heparan sulfate (HS). The polypeptide is Adenosine 3'-phospho 5'-phosphosulfate transporter 2 (Anopheles gambiae (African malaria mosquito)).